Consider the following 86-residue polypeptide: Large ribosomal subunit protein bL27 (86 aa).

The disordered stretch occupies residues 1 to 24; sequence MAHKKGTGSTRNGRDSNSKRLGVK.

It belongs to the bacterial ribosomal protein bL27 family.

The chain is Large ribosomal subunit protein bL27 from Prochlorococcus marinus (strain MIT 9301).